We begin with the raw amino-acid sequence, 263 residues long: 3-methyl-2-oxobutanoate hydroxymethyltransferase (263 aa).

2 residues coordinate Mg(2+): Asp45 and Asp84. 3-methyl-2-oxobutanoate contacts are provided by residues 45–46 (DS), Asp84, and Lys112. Mg(2+) is bound at residue Glu114. The active-site Proton acceptor is the Glu180.

It belongs to the PanB family. As to quaternary structure, homodecamer; pentamer of dimers. Mg(2+) serves as cofactor.

The protein localises to the cytoplasm. The enzyme catalyses 3-methyl-2-oxobutanoate + (6R)-5,10-methylene-5,6,7,8-tetrahydrofolate + H2O = 2-dehydropantoate + (6S)-5,6,7,8-tetrahydrofolate. The protein operates within cofactor biosynthesis; (R)-pantothenate biosynthesis; (R)-pantoate from 3-methyl-2-oxobutanoate: step 1/2. Its function is as follows. Catalyzes the reversible reaction in which hydroxymethyl group from 5,10-methylenetetrahydrofolate is transferred onto alpha-ketoisovalerate to form ketopantoate. This Salmonella arizonae (strain ATCC BAA-731 / CDC346-86 / RSK2980) protein is 3-methyl-2-oxobutanoate hydroxymethyltransferase.